Consider the following 893-residue polypeptide: TBC domain-containing protein kinase-like protein (893 aa).

The Protein kinase domain occupies 1-273 (MFPLKDAEMG…PDELMKDQVF (273 aa)). In terms of domain architecture, Rab-GAP TBC spans 466 to 651 (DIPPLMRGLT…HLWDTLLLGN (186 aa)).

Belongs to the protein kinase superfamily. As to quaternary structure, component of the FERRY complex composed of five subunits, TBCK, PPP1R21, FERRY3, CRYZL1 and GATD1 with a ratio of 1:2:1:2:4, respectively.

The protein resides in the cytoplasm. The protein localises to the cytoskeleton. Its subcellular location is the spindle. It is found in the midbody. It localises to the early endosome. Functionally, component of the FERRY complex (Five-subunit Endosomal Rab5 and RNA/ribosome intermediary). The FERRY complex directly interacts with mRNAs and RAB5A, and functions as a RAB5A effector involved in the localization and the distribution of specific mRNAs most likely by mediating their endosomal transport. The complex recruits mRNAs and ribosomes to early endosomes through direct mRNA-interaction. Also involved in the modulation of mTOR signaling and expression of mTOR complex components. Involved in the control of actin-cytoskeleton organization. This chain is TBC domain-containing protein kinase-like protein (Tbck), found in Mus musculus (Mouse).